The primary structure comprises 407 residues: Phosphoglycerate kinase (407 aa).

Substrate is bound by residues 21–23 (DLN), Arg36, 59–62 (HQGR), Arg116, and Arg156. ATP-binding positions include Glu332 and 358 to 361 (GGDT).

The protein belongs to the phosphoglycerate kinase family. Monomer.

The protein localises to the cytoplasm. It carries out the reaction (2R)-3-phosphoglycerate + ATP = (2R)-3-phospho-glyceroyl phosphate + ADP. It functions in the pathway carbohydrate degradation; glycolysis; pyruvate from D-glyceraldehyde 3-phosphate: step 2/5. This is Phosphoglycerate kinase from Halorubrum lacusprofundi (strain ATCC 49239 / DSM 5036 / JCM 8891 / ACAM 34).